The chain runs to 832 residues: WD repeat-containing protein 75 (832 aa).

13 WD repeats span residues 4-43, 47-86, 90-131, 145-184, 193-230, 236-275, 278-317, 323-361, 375-424, 431-477, 490-528, 532-572, and 577-614; these read QCQIRVVRSGGSKLDYRRSVFSADGKYLICVSGDFIKVYS, EECIHALQGHRKLVTGIELNPKNHLQLYSCSLDGTIKLWD, GILI…QLVS, KEISVIIEDVSHLPKCTAIGRQCLYVASVKGVHLSIYYFK, LKATSKKGANNIFTVVACHPSEDCIATGHMDGRIRLWR, KEYTYTSLHWHHDSVMDLAFSAQGTKLLSGGVESVLVQWP, SEEKKEFLPRLGAAIEHISVSPHGTLYCTSHTDNKISIID, SGIIQGLLKGTVVKTGLIVDPRSNALVLNGKPGHLQFYS, QQEF…KLWE, SFVL…KVWM, SWLCDFVGGYHKNQATNCCFSEDGSLLAVSFDEIITVWE, WDLK…CCWN, and ALEWRAQLDATVLQPDPLSENIAVVSCSKRWSNLFLFQ. The interval 764 to 798 is disordered; it reads SQSTEESKEDEEMKSEHSEADSSDETEEMESQKRF.

In terms of assembly, component of the proposed t-UTP subcomplex of the ribosomal small subunit (SSU) processome. SSU processome is composed of more than 70 proteins and the RNA chaperone small nucleolar RNA (snoRNA) U3.

The protein resides in the nucleus. It is found in the nucleolus. In terms of biological role, ribosome biogenesis factor. Part of the small subunit (SSU) processome, first precursor of the small eukaryotic ribosomal subunit. During the assembly of the SSU processome in the nucleolus, many ribosome biogenesis factors, an RNA chaperone and ribosomal proteins associate with the nascent pre-rRNA and work in concert to generate RNA folding, modifications, rearrangements and cleavage as well as targeted degradation of pre-ribosomal RNA by the RNA exosome. Involved in nucleolar processing of pre-18S ribosomal RNA. Required for optimal pre-ribosomal RNA transcription by RNA polymerase I. This is WD repeat-containing protein 75 (wdr75) from Xenopus laevis (African clawed frog).